Here is a 402-residue protein sequence, read N- to C-terminus: MGVELGSNSEVGALRVVILHRPGAELRRLTPRNTDQLLFDGLPWVSRAQDEHDEFAELLASRGAEVLLLSDLLTEALHHSGAARMQGIAAAVDAPRLGLPLAQELSAYLRSLDPGRLAHVLTAGMTFNELPSDTRTDVSLVLRMHHGGDFVIEPLPNLVFTRDSSIWIGPRVVIPSLALRARVREASLTDLIYAHHPRFTGVRRAYESRTAPVEGGDVLLLAPGVVAVGVGERTTPAGAEALARSLFDDDLAHTVLAVPIAQQRAQMHLDTVCTMVDTDTMVMYANVVDTLEAFTIQRTPDGVTIGDAAPFAEAAAKAMGIDKLRVIHTGMDPVVAEREQWDDGNNTLALAPGVVVAYERNVQTNARLQDAGIEVLTIAGSELGTGRGGPRCMSCPAARDPL.

Cysteine 392 (amidino-cysteine intermediate) is an active-site residue.

The protein belongs to the arginine deiminase family.

The protein localises to the cytoplasm. It carries out the reaction L-arginine + H2O = L-citrulline + NH4(+). The protein operates within amino-acid degradation; L-arginine degradation via ADI pathway; carbamoyl phosphate from L-arginine: step 1/2. The chain is Arginine deiminase (arcA) from Mycobacterium bovis (strain ATCC BAA-935 / AF2122/97).